The sequence spans 161 residues: Serine-protein kinase RsbW (161 aa).

The protein belongs to the anti-sigma-factor family.

It catalyses the reaction L-seryl-[protein] + ATP = O-phospho-L-seryl-[protein] + ADP + H(+). The catalysed reaction is L-threonyl-[protein] + ATP = O-phospho-L-threonyl-[protein] + ADP + H(+). Functionally, negative regulator of sigma-B activity. Phosphorylates and inactivates its specific antagonist protein, RsbV. Upon phosphorylation of RsbV, RsbW is released and binds to sigma-B, thereby blocking its ability to form an RNA polymerase holoenzyme (E-sigma-B). This Bacillus licheniformis (strain ATCC 14580 / DSM 13 / JCM 2505 / CCUG 7422 / NBRC 12200 / NCIMB 9375 / NCTC 10341 / NRRL NRS-1264 / Gibson 46) protein is Serine-protein kinase RsbW.